Consider the following 179-residue polypeptide: Large ribosomal subunit protein uL5 (179 aa).

The protein belongs to the universal ribosomal protein uL5 family. As to quaternary structure, part of the 50S ribosomal subunit; part of the 5S rRNA/L5/L18/L25 subcomplex. Contacts the 5S rRNA and the P site tRNA. Forms a bridge to the 30S subunit in the 70S ribosome.

Functionally, this is one of the proteins that bind and probably mediate the attachment of the 5S RNA into the large ribosomal subunit, where it forms part of the central protuberance. In the 70S ribosome it contacts protein S13 of the 30S subunit (bridge B1b), connecting the 2 subunits; this bridge is implicated in subunit movement. Contacts the P site tRNA; the 5S rRNA and some of its associated proteins might help stabilize positioning of ribosome-bound tRNAs. The polypeptide is Large ribosomal subunit protein uL5 (Burkholderia vietnamiensis (strain G4 / LMG 22486) (Burkholderia cepacia (strain R1808))).